Here is a 138-residue protein sequence, read N- to C-terminus: Lactoylglutathione lyase (138 aa).

In terms of domain architecture, VOC spans 2–126 (RLLHTMLRVG…DGYKIEFIQK (125 aa)). Residue His-5 participates in Ni(2+) binding. Arg-9 provides a ligand contact to substrate. A Ni(2+)-binding site is contributed by Glu-56. 2 residues coordinate substrate: Asn-60 and His-74. Residues His-74 and Glu-122 each coordinate Ni(2+). Catalysis depends on Glu-122, which acts as the Proton donor/acceptor.

Belongs to the glyoxalase I family. It depends on Ni(2+) as a cofactor.

The catalysed reaction is (R)-S-lactoylglutathione = methylglyoxal + glutathione. It participates in secondary metabolite metabolism; methylglyoxal degradation; (R)-lactate from methylglyoxal: step 1/2. Functionally, catalyzes the conversion of hemimercaptal, formed from methylglyoxal and glutathione, to S-lactoylglutathione. This Neisseria meningitidis serogroup A / serotype 4A (strain DSM 15465 / Z2491) protein is Lactoylglutathione lyase (gloA).